A 210-amino-acid polypeptide reads, in one-letter code: Thioredoxin-like 3-1, chloroplastic (210 aa).

A Thioredoxin domain is found at Trp-81–Val-210. Catalysis depends on nucleophile residues Cys-130 and Cys-133. The cysteines at positions 130 and 133 are disulfide-linked.

The protein belongs to the thioredoxin family.

It is found in the plastid. The protein resides in the chloroplast stroma. Probable thiol-disulfide oxidoreductase that may participate in various redox reactions. The protein is Thioredoxin-like 3-1, chloroplastic (WCRKC1) of Arabidopsis thaliana (Mouse-ear cress).